A 155-amino-acid polypeptide reads, in one-letter code: Small ribosomal subunit protein uS7 (155 aa).

The protein belongs to the universal ribosomal protein uS7 family. As to quaternary structure, part of the 30S ribosomal subunit. Contacts proteins S9 and S11.

One of the primary rRNA binding proteins, it binds directly to 16S rRNA where it nucleates assembly of the head domain of the 30S subunit. Is located at the subunit interface close to the decoding center, probably blocks exit of the E-site tRNA. This chain is Small ribosomal subunit protein uS7, found in Mycoplasma capricolum subsp. capricolum (strain California kid / ATCC 27343 / NCTC 10154).